The chain runs to 174 residues: Gamma-crystallin A (174 aa).

2 Beta/gamma crystallin 'Greek key' domains span residues 2 to 40 (GKIT…RVDS) and 41 to 83 (GCWM…RSIP). Residues 84–87 (YTSS) form a connecting peptide region. 2 consecutive Beta/gamma crystallin 'Greek key' domains span residues 88–128 (HRIR…HVLE) and 129–171 (GSWV…RRVM).

It belongs to the beta/gamma-crystallin family.

Its function is as follows. Crystallins are the dominant structural components of the vertebrate eye lens. The sequence is that of Gamma-crystallin A (Cryga) from Rattus norvegicus (Rat).